A 358-amino-acid chain; its full sequence is MAISRLIINHFRNLTAIDLEFERGFNFIIGNNGSGKTSLLEAIFYLGHGRSFKSAVANRIISYQQPHFILHGKIQEQQHQWSVGLQKQRQGNTLMKINGEDAKKISDLAHLLPMQLITPEGLTLLNGGPSYRRAYLDWGLFHHNASFYNAWSSLNRLLKQRNSALQQVCSYEKLKIWDRELTKLAYQVSYWREAYAEALRSEIEKTCQLFLPELEISVSFHQGWDKNMDYADLLQQNFERDRALGYTFSGPQKADFRFKANGLPVEDILSRGQLKLLMCALRLAQGEHLMQQKKRHCIFLLDDFASELDQYKRTLLAERLQKNGSQVFVTAITREQLQQIQPEKHRTFYLENGRIKDL.

30 to 37 (GNNGSGKT) is a binding site for ATP.

This sequence belongs to the RecF family.

It localises to the cytoplasm. The RecF protein is involved in DNA metabolism; it is required for DNA replication and normal SOS inducibility. RecF binds preferentially to single-stranded, linear DNA. It also seems to bind ATP. The sequence is that of DNA replication and repair protein RecF from Histophilus somni (strain 2336) (Haemophilus somnus).